Here is a 198-residue protein sequence, read N- to C-terminus: Beta-crystallin A1 (198 aa).

The N-terminal arm stretch occupies residues 1–13 (MAQINPLPVPLGP). Beta/gamma crystallin 'Greek key' domains lie at 14 to 53 (WKITVYDQENFQGKRMEFTSSCANIMECGFDNIRSLKVEC) and 54 to 100 (GGWI…RPIC). Residues 101–106 (SANHKE) form a connecting peptide region. 2 consecutive Beta/gamma crystallin 'Greek key' domains span residues 107–148 (SKLV…KVQC) and 149–197 (GSWV…RRIQ).

It belongs to the beta/gamma-crystallin family. In terms of assembly, homo/heterodimer, or complexes of higher-order. The structure of beta-crystallin oligomers seems to be stabilized through interactions between the N-terminal arms.

Crystallins are the dominant structural components of the vertebrate eye lens. This Rana temporaria (European common frog) protein is Beta-crystallin A1.